A 786-amino-acid chain; its full sequence is Endonuclease MutS2 (786 aa).

An ATP-binding site is contributed by 332-339 (GPNTGGKT). Positions 710-785 (VDLRGLDAEE…GDGVTMVELK (76 aa)) constitute a Smr domain.

It belongs to the DNA mismatch repair MutS family. MutS2 subfamily. In terms of assembly, homodimer. Binds to stalled ribosomes, contacting rRNA.

Functionally, endonuclease that is involved in the suppression of homologous recombination and thus may have a key role in the control of bacterial genetic diversity. Its function is as follows. Acts as a ribosome collision sensor, splitting the ribosome into its 2 subunits. Detects stalled/collided 70S ribosomes which it binds and splits by an ATP-hydrolysis driven conformational change. Acts upstream of the ribosome quality control system (RQC), a ribosome-associated complex that mediates the extraction of incompletely synthesized nascent chains from stalled ribosomes and their subsequent degradation. Probably generates substrates for RQC. This Clostridium beijerinckii (strain ATCC 51743 / NCIMB 8052) (Clostridium acetobutylicum) protein is Endonuclease MutS2.